Here is a 1053-residue protein sequence, read N- to C-terminus: Phosphoenolpyruvate carboxylase (1053 aa).

His246 is a catalytic residue. A compositionally biased stretch (basic and acidic residues) spans 461–473 (RNTRLQQQQEKDP). The tract at residues 461-480 (RNTRLQQQQEKDPTTPLPEY) is disordered. Residue Lys699 is part of the active site.

This sequence belongs to the PEPCase type 1 family. Requires Mg(2+) as cofactor.

The catalysed reaction is oxaloacetate + phosphate = phosphoenolpyruvate + hydrogencarbonate. In terms of biological role, forms oxaloacetate, a four-carbon dicarboxylic acid source for the tricarboxylic acid cycle. The sequence is that of Phosphoenolpyruvate carboxylase (ppc) from Synechococcus sp. (strain ATCC 27144 / PCC 6301 / SAUG 1402/1) (Anacystis nidulans).